A 572-amino-acid chain; its full sequence is Periplasmic pectate lyase (572 aa).

Residues 1–23 (MKKRALLLSMSVLAMLYIPAGQA) form the signal peptide.

It belongs to the polysaccharide lyase 2 family.

It localises to the periplasm. It catalyses the reaction Eliminative cleavage of (1-&gt;4)-alpha-D-galacturonan to give oligosaccharides with 4-deoxy-alpha-D-galact-4-enuronosyl groups at their non-reducing ends.. Its pathway is glycan metabolism; pectin degradation; 2-dehydro-3-deoxy-D-gluconate from pectin: step 2/5. The sequence is that of Periplasmic pectate lyase (pelY) from Yersinia pseudotuberculosis serotype I (strain IP32953).